Here is an 87-residue protein sequence, read N- to C-terminus: Defensin alpha-like protein 1 (87 aa).

A signal peptide spans 1–19 (MKTLILLSALVLLALQVQA). Residues 20–56 (DPIQEAEEETKTEEQPADEDQDVSVSFEGPEASAVQD) constitute a propeptide that is removed on maturation. Over residues 23–41 (QEAEEETKTEEQPADEDQD) the composition is skewed to acidic residues. The tract at residues 23-43 (QEAEEETKTEEQPADEDQDVS) is disordered.

The protein belongs to the alpha-defensin family. As to quaternary structure, antiparallel homodimer; disulfide-linked. Specifically expressed in small intestine (jejunum and ileum). Probably expressed by Paneth cells at the base of intestinal crypts. Coexpressed with MMP7 in small intestine.

It localises to the secreted. Its function is as follows. Intestinal defense peptide. Has potent antibacterial activity against Gram-negative bacteria E.coli O157:H7, S.typhimurium DT104, and K.pneumoniae; and against Gram-positive bacteria S.aureus, methicillin-resistant S.aureus and L.monocytogenes. Remains active in the presence of NaCl and Mg(2+). Probably functions by disrupting bacterial membrane integrity. However, does not show cytotoxic activity towards human intestinal cells. This Rattus norvegicus (Rat) protein is Defensin alpha-like protein 1.